Consider the following 493-residue polypeptide: Proline--tRNA ligase (493 aa).

The protein belongs to the class-II aminoacyl-tRNA synthetase family. ProS type 3 subfamily. Homodimer.

The protein localises to the cytoplasm. The catalysed reaction is tRNA(Pro) + L-proline + ATP = L-prolyl-tRNA(Pro) + AMP + diphosphate. Catalyzes the attachment of proline to tRNA(Pro) in a two-step reaction: proline is first activated by ATP to form Pro-AMP and then transferred to the acceptor end of tRNA(Pro). This Porphyromonas gingivalis (strain ATCC 33277 / DSM 20709 / CIP 103683 / JCM 12257 / NCTC 11834 / 2561) protein is Proline--tRNA ligase.